Here is a 1096-residue protein sequence, read N- to C-terminus: Pentatricopeptide repeat-containing protein At5g55840 (1096 aa).

PPR repeat units lie at residues 122–156 (NPSV…GFNP), 157–191 (SVYT…KICP), 192–226 (DVAT…GYAP), 227–261 (TIVT…GVDA), 262–296 (DVCT…MIHP), 297–331 (NEVT…GLSP), 332–366 (NHVT…GLTP), 367–401 (SEVS…GVCV), 402–436 (GRIT…GIDP), 437–471 (DIVT…GLSP), 472–506 (NGII…GHTR), 507–541 (DHFT…GILP), 542–576 (NTVS…GHHP), 577–607 (TFFT…LHAV), 612–646 (DTVM…SILP), 647–681 (DSYT…GNVL), 683–717 (NKVM…GHTP), 718–752 (DIVT…NGGP), 753–787 (NLTT…GILP), 788–822 (DKLT…GVEV), 823–857 (DRYT…GISL), 858–892 (DKDT…GISP), 893–927 (ESRK…KICP), 928–962 (PNVA…KLVP), 963–997 (TIAS…GLKL), 998–1032 (DLVS…GFLA), and 1033–1068 (NATT…GFIT).

The protein belongs to the PPR family. P subfamily.

The sequence is that of Pentatricopeptide repeat-containing protein At5g55840 from Arabidopsis thaliana (Mouse-ear cress).